Consider the following 853-residue polypeptide: Putative dipeptidyl aminopeptidase C14C4.15c (853 aa).

A disordered region spans residues 1 to 26 (MNAYEGDTLNNHGKSSTRQHWRKRSA). Residues 1 to 65 (MNAYEGDTLN…AKKRRRKKHR (65 aa)) are Cytoplasmic-facing. The span at 15–25 (SSTRQHWRKRS) shows a compositional bias: basic residues. A helical; Signal-anchor for type II membrane protein transmembrane segment spans residues 66–86 (YIYLAVCLFFLASVLSCAIIF). Residues 87 to 853 (RFYLHTNREN…SGHFHHALYC (767 aa)) lie on the Lumenal side of the membrane. Asparagine 96, asparagine 102, asparagine 472, asparagine 483, and asparagine 613 each carry an N-linked (GlcNAc...) asparagine glycan. Residues serine 719, aspartate 795, and histidine 828 each act as charge relay system in the active site.

It belongs to the peptidase S9B family.

It localises to the vacuole membrane. The sequence is that of Putative dipeptidyl aminopeptidase C14C4.15c from Schizosaccharomyces pombe (strain 972 / ATCC 24843) (Fission yeast).